We begin with the raw amino-acid sequence, 443 residues long: Ribosomal protein uS12 methylthiotransferase RimO (443 aa).

In terms of domain architecture, MTTase N-terminal spans 10-120 (PRVGFVSLGC…VVKAVHQHLP (111 aa)). [4Fe-4S] cluster is bound by residues Cys-19, Cys-55, Cys-84, Cys-151, Cys-155, and Cys-158. The 239-residue stretch at 137–375 (LTPAHYAYLK…DFQEDISTQR (239 aa)) folds into the Radical SAM core domain. The TRAM domain maps to 377-443 (ERWIGRDITV…VHDLYARPLP (67 aa)).

This sequence belongs to the methylthiotransferase family. RimO subfamily. The cofactor is [4Fe-4S] cluster.

The protein resides in the cytoplasm. The enzyme catalyses L-aspartate(89)-[ribosomal protein uS12]-hydrogen + (sulfur carrier)-SH + AH2 + 2 S-adenosyl-L-methionine = 3-methylsulfanyl-L-aspartate(89)-[ribosomal protein uS12]-hydrogen + (sulfur carrier)-H + 5'-deoxyadenosine + L-methionine + A + S-adenosyl-L-homocysteine + 2 H(+). Functionally, catalyzes the methylthiolation of an aspartic acid residue of ribosomal protein uS12. This is Ribosomal protein uS12 methylthiotransferase RimO from Aromatoleum aromaticum (strain DSM 19018 / LMG 30748 / EbN1) (Azoarcus sp. (strain EbN1)).